A 2209-amino-acid chain; its full sequence is Orsellinic acid synthase armB (2209 aa).

An N-terminal acylcarrier protein transacylase domain (SAT) region spans residues Leu38–His261. Positions Gln391–Glu817 constitute a Ketosynthase family 3 (KS3) domain. Residues Cys561, His696, and His736 each act as for beta-ketoacyl synthase activity in the active site. The interval Val914 to Gln1239 is malonyl-CoA:ACP transacylase (MAT) domain. Ser1008 (for acyl/malonyl transferase activity) is an active-site residue. An N-terminal hotdog fold region spans residues Met1306–Asp1436. One can recognise a PKS/mFAS DH domain in the interval Met1306 to Gln1613. Residues Ile1335–Asn1610 form a product template (PT) domain region. His1338 functions as the Proton acceptor; for dehydratase activity in the catalytic mechanism. Residues Ala1463–Gln1613 form a C-terminal hotdog fold region. Asp1524 acts as the Proton donor; for dehydratase activity in catalysis. Carrier domains follow at residues Val1659–Ile1734 and Ser1844–Gln1921. 2 positions are modified to O-(pantetheine 4'-phosphoryl)serine: Ser1693 and Ser1881. A disordered region spans residues Ile1917–Leu1945. Residues Ala1932–Ser1943 are compositionally biased toward acidic residues. A thioesterase (TE) domain region spans residues Val1962–Asp2201.

It carries out the reaction 3 malonyl-CoA + acetyl-CoA + 2 H(+) = orsellinate + 3 CO2 + 4 CoA. Its pathway is secondary metabolite biosynthesis. Functionally, non-reducing polyketide synthase, part of the gene cluster that mediates the biosynthesis of melleolides, a range of antifungal and phytotoxic polyketide derivatives composed of an orsellinic acid (OA) moiety esterified to various sesquiterpene alcohols. The first step in melleolides biosynthesis is performed by the delta(6)-protoilludene synthase PRO1 which catalyzes the cyclization of farnesyl diphosphate to protoilludene. The orsellinic acid synthase armB produces OA by condensing acetyl-CoA with 3 malonyl-CoA units in a three-round chain elongation reaction folowed by a C2-C7 ring closure. ArmB further catalyzes the trans-esterification of OA to the various sesquiterpene alcohols resulting from the hydroxylation of protoilludene. The melleolides cluster also includes 5 cytochrome P450 monooxygenases, 4 NAD(+)-dependent oxidoreductases, one flavin-dependent oxidoreductase, and one O-methyltransferase. The cytochrome P450 monooxygenases may be involved in protoilludene hydroxylation to elaborate melleolides with multiple alcohol groups, such as melleolide D, which carries alcohol functionalities at C-4, C-5, C-10, and C-13. The role of the NAD(+)-dependent enzymes remains unknown. Numerous melleolides, including arnamial, show 5'-O-methylation of the aromatic moiety which may be catalyzed by the methyltransferase encoded in the cluster. The flavin-dependent oxidoreductase might represent the dehydrogenase yielding the aldehyde in position 1 of arnamial and other melleolides. Finally, several halogenase localized outside of the cluster (armH1 to armH5), are able to catalyze the transfer of a single chlorine atom to the melleolide backbone, resulting in a 6'-chloromelleolide product. The polypeptide is Orsellinic acid synthase armB (Armillaria mellea (Honey mushroom)).